A 177-amino-acid chain; its full sequence is Small ribosomal subunit protein uS5 (177 aa).

The 64-residue stretch at 14 to 77 (LQEKLITVNR…EKARHNMIDI (64 aa)) folds into the S5 DRBM domain.

It belongs to the universal ribosomal protein uS5 family. In terms of assembly, part of the 30S ribosomal subunit. Contacts proteins S4 and S8.

Its function is as follows. With S4 and S12 plays an important role in translational accuracy. Located at the back of the 30S subunit body where it stabilizes the conformation of the head with respect to the body. The protein is Small ribosomal subunit protein uS5 of Blochmanniella floridana.